The chain runs to 237 residues: Ribosomal RNA large subunit methyltransferase E (237 aa).

The S-adenosyl-L-methionine site is built by Gly-80, Trp-82, Asp-108, Asp-124, and Asp-148. Lys-188 serves as the catalytic Proton acceptor.

The protein belongs to the class I-like SAM-binding methyltransferase superfamily. RNA methyltransferase RlmE family.

Its subcellular location is the cytoplasm. The catalysed reaction is uridine(2552) in 23S rRNA + S-adenosyl-L-methionine = 2'-O-methyluridine(2552) in 23S rRNA + S-adenosyl-L-homocysteine + H(+). Its function is as follows. Specifically methylates the uridine in position 2552 of 23S rRNA at the 2'-O position of the ribose in the fully assembled 50S ribosomal subunit. The chain is Ribosomal RNA large subunit methyltransferase E from Jannaschia sp. (strain CCS1).